The chain runs to 378 residues: Chorismate synthase (378 aa).

A disordered region spans residues E37–E60. R47 provides a ligand contact to NADP(+). Residues R124–S126, G289, K304–T308, and R330 each bind FMN.

This sequence belongs to the chorismate synthase family. As to quaternary structure, homotetramer. FMNH2 is required as a cofactor.

The catalysed reaction is 5-O-(1-carboxyvinyl)-3-phosphoshikimate = chorismate + phosphate. It participates in metabolic intermediate biosynthesis; chorismate biosynthesis; chorismate from D-erythrose 4-phosphate and phosphoenolpyruvate: step 7/7. Its function is as follows. Catalyzes the anti-1,4-elimination of the C-3 phosphate and the C-6 proR hydrogen from 5-enolpyruvylshikimate-3-phosphate (EPSP) to yield chorismate, which is the branch point compound that serves as the starting substrate for the three terminal pathways of aromatic amino acid biosynthesis. This reaction introduces a second double bond into the aromatic ring system. The polypeptide is Chorismate synthase (Leptospira biflexa serovar Patoc (strain Patoc 1 / Ames)).